The sequence spans 418 residues: MMSWADKYRPKNIDDVILNSEIRKQITEWIESWKEGIPKKRSLILYGSQGTGKTTTAYAIAGTFGVPVVEMNASDQRNRDSMRGTALMASLYGDLFVESAKRPSKVILIDEADNMFERGGDTGGIYELSKIIKNSANPIVITMNDIFEFRKKNYASDVISASLTIEMKQYGRKLDKNYNEFRRNIKARLIFILKNEGYTLPDQVVDRIIDRNMPDIRSMINDLEASAVSGTNISDQSSRDVPEIVYYMVDKAFKRNYDDTLRSIYGSDIDDSYYVSWIDENLPLKTVDLQDLVSAYEVISYADHILWAMERRRHYELMAFPMEIAGGVAYYIENMKHEYVKYQSPSYISQMSKTKEKRHAMMSLALKIGLLIHMGAQRTSEDLWFYSLLYQHNEKLRTFFEEKLNLTQGEENVLTRSE.

47–54 (GSQGTGKT) is a binding site for ATP.

This sequence belongs to the activator 1 small subunits family. RfcL subfamily. In terms of assembly, heteromultimer composed of small subunits (RfcS) and large subunits (RfcL).

Part of the RFC clamp loader complex which loads the PCNA sliding clamp onto DNA. The chain is Replication factor C large subunit from Thermoplasma acidophilum (strain ATCC 25905 / DSM 1728 / JCM 9062 / NBRC 15155 / AMRC-C165).